A 378-amino-acid polypeptide reads, in one-letter code: Chaperone protein DnaJ (378 aa).

Residues 5–69 (DYYEVLGVSK…NKRANYDQFG (65 aa)) form the J domain. The CR-type zinc-finger motif lies at 135-217 (GSEKEISIRK…CHGKGTENKN (83 aa)). Cys148, Cys151, Cys165, Cys168, Cys191, Cys194, Cys205, and Cys208 together coordinate Zn(2+). CXXCXGXG motif repeat units lie at residues 148–155 (CHTCDGEG), 165–172 (CHYCNGSG), 191–198 (CPVCSGSG), and 205–212 (CPTCHGKG).

The protein belongs to the DnaJ family. Homodimer. Requires Zn(2+) as cofactor.

The protein resides in the cytoplasm. Its function is as follows. Participates actively in the response to hyperosmotic and heat shock by preventing the aggregation of stress-denatured proteins and by disaggregating proteins, also in an autonomous, DnaK-independent fashion. Unfolded proteins bind initially to DnaJ; upon interaction with the DnaJ-bound protein, DnaK hydrolyzes its bound ATP, resulting in the formation of a stable complex. GrpE releases ADP from DnaK; ATP binding to DnaK triggers the release of the substrate protein, thus completing the reaction cycle. Several rounds of ATP-dependent interactions between DnaJ, DnaK and GrpE are required for fully efficient folding. Also involved, together with DnaK and GrpE, in the DNA replication of plasmids through activation of initiation proteins. The polypeptide is Chaperone protein DnaJ (Staphylococcus saprophyticus subsp. saprophyticus (strain ATCC 15305 / DSM 20229 / NCIMB 8711 / NCTC 7292 / S-41)).